We begin with the raw amino-acid sequence, 227 residues long: Glutathione S-transferase U17 (227 aa).

Residues 4 to 83 form the GST N-terminal domain; the sequence is SDVKLIGAWA…YIDDTWSSSG (80 aa). Glutathione is bound by residues 14–15, 40–41, 54–55, and 67–68; these read SP, SK, KI, and ES. In terms of domain architecture, GST C-terminal spans 90-222; sequence DPYDRAMARF…KLAEFAKKIF (133 aa).

The protein belongs to the GST superfamily. Tau family.

The protein localises to the cytoplasm. Its subcellular location is the cytosol. The enzyme catalyses RX + glutathione = an S-substituted glutathione + a halide anion + H(+). Functionally, involved in light signaling, mainly phyA-mediated photomorphogenesis and in the integration of various phytohormone signals to modulate various aspects of plant development by affecting glutathione pools. In vitro, possesses glutathione S-transferase activity toward 1-chloro-2,4-dinitrobenzene (CDNB) and benzyl isothiocyanate (BITC). The chain is Glutathione S-transferase U17 (GSTU17) from Arabidopsis thaliana (Mouse-ear cress).